The chain runs to 122 residues: Large ribosomal subunit protein uL14 (122 aa).

This sequence belongs to the universal ribosomal protein uL14 family. As to quaternary structure, part of the 50S ribosomal subunit. Forms a cluster with proteins L3 and L19. In the 70S ribosome, L14 and L19 interact and together make contacts with the 16S rRNA in bridges B5 and B8.

Its function is as follows. Binds to 23S rRNA. Forms part of two intersubunit bridges in the 70S ribosome. The sequence is that of Large ribosomal subunit protein uL14 from Endomicrobium trichonymphae.